Consider the following 472-residue polypeptide: MPNSEPCVSPLELFNSIATQGELVRSLKAGNASKDEIDSAVKMLLSLKMSYKAAMGEDYKANCPPGNPAPTSNHGPDATEAEEDFVDPWTVQTSSAKGIDYDKLIVRFGSSKIDKELINRIERATGQRPHRFLRRGIFFSHRDMNQVLDAYENKKPFYLYTGRGPSSEAMHVGHLIPFIFTKWLQDVFNVPLVIQMTDDEKYLWKDLTLDQAYSYAVENAKDIIACGFDINKTFIFSDLDYMGMSSGFYKNVVKIQKHVTFNQVKGIFGFTDSDCIGKISFPAIQAAPSFSNSFPQIFRDRTDIQCLIPCAIDQDPYFRMTRDVAPRIGYPKPALLHSTFFPALQGAQTKMSASDPNSSIFLTDTAKQIKTKVNKHAFSGGRDTIEEHRQFGGNCDVDVSFMYLTFFLEDDDKLEQIRKDYTSGAMLTGELKKALIEVLQPLIAEHQARRKEVTDEIVKEFMTPRKLSFDFQ.

A WHEP-TRS domain is found at 9 to 65 (SPLELFNSIATQGELVRSLKAGNASKDEIDSAVKMLLSLKMSYKAAMGEDYKANCPP). The residue at position 155 (lysine 155) is an N6-succinyllysine. Residues 165 to 174 (PSSEAMHVGH) carry the 'HIGH' region motif. Residues 350–354 (KMSAS) carry the 'KMSKS' region motif. Serine 352 bears the Phosphoserine mark.

Belongs to the class-I aminoacyl-tRNA synthetase family. As to quaternary structure, homodimer. Interacts with oxidized form of GAPDH. In terms of processing, proteolytic cleavage generates 2 forms; T1-TrpRS and T2-TrpRS.

It localises to the cytoplasm. The enzyme catalyses tRNA(Trp) + L-tryptophan + ATP = L-tryptophyl-tRNA(Trp) + AMP + diphosphate + H(+). Its function is as follows. Catalyzes the attachment of tryptophan to tRNA(Trp) in a two-step reaction: tryptophan is first activated by ATP to form Trp-AMP and then transferred to the acceptor end of the tRNA(Trp). Could also possess an angiostatic activity. This Pongo abelii (Sumatran orangutan) protein is Tryptophan--tRNA ligase, cytoplasmic (WARS1).